Here is a 265-residue protein sequence, read N- to C-terminus: Mlc titration factor A (265 aa).

Residues His-111, His-148, His-152, and Glu-211 each contribute to the Zn(2+) site.

This sequence belongs to the MtfA family. In terms of assembly, interacts with Mlc. Zn(2+) serves as cofactor.

Its subcellular location is the cytoplasm. In terms of biological role, involved in the modulation of the activity of the glucose-phosphotransferase system (glucose-PTS). Interacts with the transcriptional repressor Mlc, preventing its interaction with DNA and leading to the modulation of expression of genes regulated by Mlc, including ptsG, which encodes the PTS system glucose-specific EIICB component. Functionally, shows zinc-dependent metallopeptidase activity. The chain is Mlc titration factor A from Cronobacter sakazakii (strain ATCC BAA-894) (Enterobacter sakazakii).